The primary structure comprises 143 residues: Putative pre-16S rRNA nuclease (143 aa).

Belongs to the YqgF nuclease family.

It is found in the cytoplasm. Could be a nuclease involved in processing of the 5'-end of pre-16S rRNA. This chain is Putative pre-16S rRNA nuclease, found in Leuconostoc mesenteroides subsp. mesenteroides (strain ATCC 8293 / DSM 20343 / BCRC 11652 / CCM 1803 / JCM 6124 / NCDO 523 / NBRC 100496 / NCIMB 8023 / NCTC 12954 / NRRL B-1118 / 37Y).